Here is a 267-residue protein sequence, read N- to C-terminus: Coiled-coil domain-containing protein 90B, mitochondrial (267 aa).

The N-terminal 47 residues, 1–47 (MKGSQLYRHLSLQGNRLHLHLFQGKKLQLHPSQGHKGTAHRTWKKGF), are a transit peptide targeting the mitochondrion. The stretch at 142 to 175 (LEKSEFATLRAENEKMKIELEHVRQHLLNETNRI) forms a coiled coil. The chain crosses the membrane as a helical span at residues 244 to 266 (TVRYMAASVFTCLAIALGFYRLW).

The protein belongs to the CCDC90 family.

The protein localises to the mitochondrion membrane. The sequence is that of Coiled-coil domain-containing protein 90B, mitochondrial (ccdc90b) from Xenopus tropicalis (Western clawed frog).